Here is a 104-residue protein sequence, read N- to C-terminus: Small ribosomal subunit protein bS18 (104 aa).

Basic and acidic residues predominate over residues 1-14 (MMNNEHDNFQKEVE). A disordered region spans residues 1 to 25 (MMNNEHDNFQKEVETTTETTFNREE).

The protein belongs to the bacterial ribosomal protein bS18 family. As to quaternary structure, part of the 30S ribosomal subunit. Forms a tight heterodimer with protein bS6.

Its function is as follows. Binds as a heterodimer with protein bS6 to the central domain of the 16S rRNA, where it helps stabilize the platform of the 30S subunit. The protein is Small ribosomal subunit protein bS18 of Mycoplasma pneumoniae (strain ATCC 29342 / M129 / Subtype 1) (Mycoplasmoides pneumoniae).